Consider the following 783-residue polypeptide: BMP/retinoic acid-inducible neural-specific protein 2 (783 aa).

The signal sequence occupies residues 1–33 (MRWPCSSRFRGLWPEAAPWAVLLALGVPGWVLA). The 197-residue stretch at 85-281 (RYRIYREFAR…FVAAALSYIT (197 aa)) folds into the MACPF domain. N-linked (GlcNAc...) asparagine glycans are attached at residues Asn-185, Asn-354, Asn-473, Asn-579, Asn-626, and Asn-658.

The protein belongs to the BRINP family. In terms of tissue distribution, expressed in olfactory bulb, cerebellum and neuronal layers in hippocampus.

The protein localises to the secreted. Its function is as follows. Inhibits neuronal cell proliferation by negative regulation of the cell cycle transition. In Rattus norvegicus (Rat), this protein is BMP/retinoic acid-inducible neural-specific protein 2 (Brinp2).